Here is a 372-residue protein sequence, read N- to C-terminus: Y-box-binding protein 3 (372 aa).

Residues 1–82 are disordered; it reads MSEAGEATTT…LATAAGSEDA (82 aa). Ser2 is subject to N-acetylserine. Ser2 carries the post-translational modification Phosphoserine. The segment covering 7–28 has biased composition (low complexity); it reads ATTTTTTTLPQAPTEAAAAAPQ. Ser34 carries the phosphoserine modification. Positions 35–79 are enriched in low complexity; sequence PVGSGAPQAAAPAPAAHVAGNPGGDAAPAATGTAAAASLATAAGS. A CSD domain is found at 93–157; it reads GTVKWFNVRN…GEKGAEAANV (65 aa). A phosphoserine mark is found at Ser134, Ser201, Ser203, and Ser204. Residues 181-372 form a disordered region; the sequence is YYGRRRGPPR…APPTQQSSAE (192 aa). Over residues 222-238 the composition is skewed to basic residues; sequence QLRRPQYRPQYRQRRFP. Arg251 carries the omega-N-methylarginine modification. Positions 314–324 are enriched in polar residues; sequence QQATSGPNQPS. Residue Ser324 is modified to Phosphoserine. An Omega-N-methylarginine modification is found at Arg326. The span at 327–340 shows a compositional bias: basic residues; that stretch reads RGYRRPYNYRRRPR. Phosphoserine is present on residues Ser346, Ser369, and Ser370.

As to quaternary structure, found in a mRNP complex with YBX2. Interacts with RRP1B. As to expression, highly expressed in skeletal muscle and heart.

The protein resides in the cytoplasm. Its subcellular location is the nucleus. Binds to the GM-CSF promoter. Seems to act as a repressor. Also binds to full-length mRNA and to short RNA sequences containing the consensus site 5'-UCCAUCA-3'. May have a role in translation repression. The chain is Y-box-binding protein 3 (YBX3) from Homo sapiens (Human).